Here is a 118-residue protein sequence, read N- to C-terminus: Large ribosomal subunit protein bL19 (118 aa).

It belongs to the bacterial ribosomal protein bL19 family.

Its function is as follows. This protein is located at the 30S-50S ribosomal subunit interface and may play a role in the structure and function of the aminoacyl-tRNA binding site. The chain is Large ribosomal subunit protein bL19 from Ligilactobacillus salivarius (strain UCC118) (Lactobacillus salivarius).